The chain runs to 375 residues: Alcohol dehydrogenase 4, mitochondrial (375 aa).

The N-terminal 27 residues, 1–27, are a transit peptide targeting the mitochondrion; the sequence is MFRLARAQTALANKASVSRSFLRLNSS. Residues Cys-71, His-94, Cys-125, Cys-128, Cys-131, Cys-139, and Cys-181 each contribute to the Zn(2+) site. Residues 205–211, Asp-229, Lys-234, 296–298, and Arg-368 each bind NAD(+); these read GAAGGLG and VGL.

It belongs to the zinc-containing alcohol dehydrogenase family. As to quaternary structure, homotetramer. Zn(2+) serves as cofactor.

The protein localises to the mitochondrion matrix. It carries out the reaction a primary alcohol + NAD(+) = an aldehyde + NADH + H(+). It catalyses the reaction a secondary alcohol + NAD(+) = a ketone + NADH + H(+). The protein is Alcohol dehydrogenase 4, mitochondrial (ADH4) of Kluyveromyces lactis (strain ATCC 8585 / CBS 2359 / DSM 70799 / NBRC 1267 / NRRL Y-1140 / WM37) (Yeast).